We begin with the raw amino-acid sequence, 166 residues long: Small ribosomal subunit protein uS5 (166 aa).

The 64-residue stretch at 11 to 74 (LQEKLIAVNR…EKARRNMINV (64 aa)) folds into the S5 DRBM domain.

It belongs to the universal ribosomal protein uS5 family. As to quaternary structure, part of the 30S ribosomal subunit. Contacts proteins S4 and S8.

In terms of biological role, with S4 and S12 plays an important role in translational accuracy. Functionally, located at the back of the 30S subunit body where it stabilizes the conformation of the head with respect to the body. The polypeptide is Small ribosomal subunit protein uS5 (Haemophilus ducreyi (strain 35000HP / ATCC 700724)).